The chain runs to 114 residues: Peroxisomal biogenesis factor 39 (114 aa).

Disordered stretches follow at residues 1-26 (MSWW…AEPA) and 53-114 (ITAT…PRVS). Ser102 is subject to Phosphoserine.

It is found in the peroxisome. Its function is as follows. May be a peroxin involved in the PTS2-mediated protein import pathway. This chain is Peroxisomal biogenesis factor 39 (Pex39), found in Mus musculus (Mouse).